Here is a 371-residue protein sequence, read N- to C-terminus: MSEISLIMLAAGNSTRFNTKVKKQFLRLGNDPLWLYATKNLSSFYPFKKIVVTSSNISYMKKFTKNYEFIEGGDTRAESLKKALELIDSEFVMVSDVARVLVSKNLFDRLIENLDKADCITPALKVADTTLFDNEALQREKIKLIQTPQISKTKLLKKALDQNLEFTDDSTAIAAMGGKIWFVEGEENARKLTFKEDLKKLDLPTPSFEIFTGNGFDVHEFGENRPLLLAGVQIHPTMGLKAHSDGDVLAHSLTDAILGAAGLGDIGELYPDTDMKFKNANSMELLKQAYDKVREVGFELINIDICVMAQSPKLKDFKQAMQSNIAHTLDLDEFRINVKATTTEKLGFIGRKEGMAVLSSVNLKYFDWTRL.

The tract at residues 1–210 (MSEISLIMLA…LDLPTPSFEI (210 aa)) is 2-C-methyl-D-erythritol 4-phosphate cytidylyltransferase. A 2-C-methyl-D-erythritol 2,4-cyclodiphosphate synthase region spans residues 211-371 (FTGNGFDVHE…NLKYFDWTRL (161 aa)). A divalent metal cation-binding residues include Asp-217 and His-219. 4-CDP-2-C-methyl-D-erythritol 2-phosphate contacts are provided by residues 217–219 (DVH) and 243–244 (HS). His-251 is a binding site for a divalent metal cation. 4-CDP-2-C-methyl-D-erythritol 2-phosphate-binding positions include 265 to 267 (DIG), 270 to 274 (YPDTD), 341 to 344 (TTTE), Phe-348, and Arg-351.

It in the N-terminal section; belongs to the IspD/TarI cytidylyltransferase family. IspD subfamily. In the C-terminal section; belongs to the IspF family. It depends on a divalent metal cation as a cofactor.

The enzyme catalyses 2-C-methyl-D-erythritol 4-phosphate + CTP + H(+) = 4-CDP-2-C-methyl-D-erythritol + diphosphate. It carries out the reaction 4-CDP-2-C-methyl-D-erythritol 2-phosphate = 2-C-methyl-D-erythritol 2,4-cyclic diphosphate + CMP. The protein operates within isoprenoid biosynthesis; isopentenyl diphosphate biosynthesis via DXP pathway; isopentenyl diphosphate from 1-deoxy-D-xylulose 5-phosphate: step 2/6. Its pathway is isoprenoid biosynthesis; isopentenyl diphosphate biosynthesis via DXP pathway; isopentenyl diphosphate from 1-deoxy-D-xylulose 5-phosphate: step 4/6. Functionally, bifunctional enzyme that catalyzes the formation of 4-diphosphocytidyl-2-C-methyl-D-erythritol from CTP and 2-C-methyl-D-erythritol 4-phosphate (MEP) (IspD), and catalyzes the conversion of 4-diphosphocytidyl-2-C-methyl-D-erythritol 2-phosphate (CDP-ME2P) to 2-C-methyl-D-erythritol 2,4-cyclodiphosphate (ME-CPP) with a corresponding release of cytidine 5-monophosphate (CMP) (IspF). This chain is Bifunctional enzyme IspD/IspF, found in Campylobacter jejuni subsp. jejuni serotype O:23/36 (strain 81-176).